Consider the following 229-residue polypeptide: Enolase-phosphatase E1 (229 aa).

Residues 206-229 (DRDPASHHPQVQRFDDIHPEQIPA) are disordered. The span at 218 to 229 (RFDDIHPEQIPA) shows a compositional bias: basic and acidic residues.

It belongs to the HAD-like hydrolase superfamily. MasA/MtnC family. In terms of assembly, monomer. It depends on Mg(2+) as a cofactor.

It catalyses the reaction 5-methylsulfanyl-2,3-dioxopentyl phosphate + H2O = 1,2-dihydroxy-5-(methylsulfanyl)pent-1-en-3-one + phosphate. The protein operates within amino-acid biosynthesis; L-methionine biosynthesis via salvage pathway; L-methionine from S-methyl-5-thio-alpha-D-ribose 1-phosphate: step 3/6. Its pathway is amino-acid biosynthesis; L-methionine biosynthesis via salvage pathway; L-methionine from S-methyl-5-thio-alpha-D-ribose 1-phosphate: step 4/6. In terms of biological role, bifunctional enzyme that catalyzes the enolization of 2,3-diketo-5-methylthiopentyl-1-phosphate (DK-MTP-1-P) into the intermediate 2-hydroxy-3-keto-5-methylthiopentenyl-1-phosphate (HK-MTPenyl-1-P), which is then dephosphorylated to form the acireductone 1,2-dihydroxy-3-keto-5-methylthiopentene (DHK-MTPene). This chain is Enolase-phosphatase E1, found in Klebsiella oxytoca.